Reading from the N-terminus, the 471-residue chain is Putative multidrug resistance protein MdtD (471 aa).

Topologically, residues 1–11 are periplasmic; it reads MTDLPDSTRWQ. The chain crosses the membrane as a helical span at residues 12–32; sequence LWIVAFGFFMQSLDTTIVNTA. Topologically, residues 33–48 are cytoplasmic; sequence LPSMAQSLGESPLHMH. A helical membrane pass occupies residues 49–69; it reads MVIVSYVLTVAVMLPASGWLA. At 70-76 the chain is on the periplasmic side; sequence DKVGVRN. The helical transmembrane segment at 77–97 threads the bilayer; the sequence is IFFTAIVLFTLGSLFCALSAT. The Cytoplasmic portion of the chain corresponds to 98 to 101; sequence LNEL. A helical membrane pass occupies residues 102–124; sequence LLARALQGVGGAMMVPVGRLTVM. At 125–137 the chain is on the periplasmic side; it reads KIVPREQYMAAMT. The chain crosses the membrane as a helical span at residues 138–158; sequence FVTLPGQVGPLLGPALGGLLV. Topologically, residues 159 to 164 are cytoplasmic; that stretch reads EYASWH. The chain crosses the membrane as a helical span at residues 165 to 185; sequence WIFLINIPVGIIGAIATLMLM. At 186–196 the chain is on the periplasmic side; it reads PNYTMQTRRFD. The chain crosses the membrane as a helical span at residues 197 to 217; it reads LSGFLLLAVGMAVLTLALDGS. Residues 218 to 224 are Cytoplasmic-facing; the sequence is KGTGLSP. A helical transmembrane segment spans residues 225 to 245; it reads LAIAGLAAIGVVALVLYLLHA. Residues 246–262 lie on the Periplasmic side of the membrane; the sequence is RNNNRALFSLKLFRTRT. Residues 263-283 form a helical membrane-spanning segment; it reads FSLGLAGSFAGRIGSGMLPFM. Over 284-285 the chain is Cytoplasmic; that stretch reads TP. The helical transmembrane segment at 286-306 threads the bilayer; the sequence is VFLQIGLGFSPFHAGLMMIPM. Over 307–341 the chain is Periplasmic; it reads VLGSMGMKRIVVQVVNRFGYRRVLVATTLGLSLVT. A helical membrane pass occupies residues 342-362; that stretch reads LLFMTTALLGWYYVLPFVLFL. Residues 363–395 are Cytoplasmic-facing; that stretch reads QGMVNSTRFSSMNTLTLKDLPDNLASSGNSLLS. Residues 396–416 form a helical membrane-spanning segment; the sequence is MIMQLSMSIGVTIAGLLLGLF. Residues 417 to 430 are Periplasmic-facing; sequence GSQHVSVDSSTTQT. Residues 431-451 traverse the membrane as a helical segment; the sequence is VFMYTWLSMALIIALPAFIFA. At 452–471 the chain is on the cytoplasmic side; sequence RVPNDTHQNVAISRRKRSAQ.

This sequence belongs to the major facilitator superfamily. TCR/Tet family.

The protein localises to the cell inner membrane. This chain is Putative multidrug resistance protein MdtD, found in Escherichia fergusonii (strain ATCC 35469 / DSM 13698 / CCUG 18766 / IAM 14443 / JCM 21226 / LMG 7866 / NBRC 102419 / NCTC 12128 / CDC 0568-73).